A 175-amino-acid chain; its full sequence is MSAIAQEREARINGEITAREIRLVGKEGEQIGIVSLREAMALAEENDVDLVEISPTAQPPVCKLMDYGKYKYEQSKKRHEAKQKQKQVQIKEIKFRPGTDDGDYNVKLRNLVRFLTEGDKAKVTLRFRGREMAHQDIGLALLKRVEADLAEVGTVEQFPRLEGRQMVMMIAPKKK.

The protein belongs to the IF-3 family. Monomer.

Its subcellular location is the cytoplasm. IF-3 binds to the 30S ribosomal subunit and shifts the equilibrium between 70S ribosomes and their 50S and 30S subunits in favor of the free subunits, thus enhancing the availability of 30S subunits on which protein synthesis initiation begins. This chain is Translation initiation factor IF-3, found in Chromobacterium violaceum (strain ATCC 12472 / DSM 30191 / JCM 1249 / CCUG 213 / NBRC 12614 / NCIMB 9131 / NCTC 9757 / MK).